The following is a 309-amino-acid chain: RHOMBOID-like protein 5 (309 aa).

Helical transmembrane passes span 27–47, 113–133, 140–160, 170–190, 200–220, 222–242, and 274–294; these read IPVP…FVTF, IWLH…MCIG, FGFM…SLVS, VSVG…SELI, CTAL…GFLP, VDNS…FVLL, and IFRF…YTKL. The active-site Nucleophile is the Ser175. The Charge relay system role is filled by His227.

This sequence belongs to the peptidase S54 family.

It localises to the membrane. It carries out the reaction Cleaves type-1 transmembrane domains using a catalytic dyad composed of serine and histidine that are contributed by different transmembrane domains.. Probable rhomboid-type serine protease that catalyzes intramembrane proteolysis. May function in reproductive organs maturation. This chain is RHOMBOID-like protein 5, found in Arabidopsis thaliana (Mouse-ear cress).